The following is a 33-amino-acid chain: Photosystem II reaction center protein Psb30 (33 aa).

Residues 5 to 25 traverse the membrane as a helical segment; that stretch reads LIVQLTSLALITLAGPLIVAL.

Belongs to the Psb30/Ycf12 family. As to quaternary structure, PSII is composed of 1 copy each of membrane proteins PsbA, PsbB, PsbC, PsbD, PsbE, PsbF, PsbH, PsbI, PsbJ, PsbK, PsbL, PsbM, PsbT, PsbY, PsbZ, Psb30/Ycf12, peripheral proteins of the oxygen-evolving complex and a large number of cofactors. It forms dimeric complexes.

It is found in the plastid. It localises to the chloroplast thylakoid membrane. A core subunit of photosystem II (PSII), probably helps stabilize the reaction center. In Euglena sanguinea, this protein is Photosystem II reaction center protein Psb30.